Here is a 248-residue protein sequence, read N- to C-terminus: Triosephosphate isomerase (248 aa).

Substrate is bound at residue 9 to 11; that stretch reads NWK. Histidine 94 serves as the catalytic Electrophile. The Proton acceptor role is filled by glutamate 166. Substrate-binding positions include glycine 172, serine 212, and 233 to 234; that span reads GG.

This sequence belongs to the triosephosphate isomerase family. As to quaternary structure, homodimer.

The protein localises to the cytoplasm. It catalyses the reaction D-glyceraldehyde 3-phosphate = dihydroxyacetone phosphate. It functions in the pathway carbohydrate biosynthesis; gluconeogenesis. It participates in carbohydrate degradation; glycolysis; D-glyceraldehyde 3-phosphate from glycerone phosphate: step 1/1. Functionally, involved in the gluconeogenesis. Catalyzes stereospecifically the conversion of dihydroxyacetone phosphate (DHAP) to D-glyceraldehyde-3-phosphate (G3P). This is Triosephosphate isomerase from Thermoanaerobacter sp. (strain X514).